Here is a 190-residue protein sequence, read N- to C-terminus: Large ribosomal subunit protein uL10 (190 aa).

Positions 170–190 (AAGAPAEAAPVEAPAAETVDA) are disordered.

This sequence belongs to the universal ribosomal protein uL10 family. In terms of assembly, part of the ribosomal stalk of the 50S ribosomal subunit. The N-terminus interacts with L11 and the large rRNA to form the base of the stalk. The C-terminus forms an elongated spine to which L12 dimers bind in a sequential fashion forming a multimeric L10(L12)X complex.

In terms of biological role, forms part of the ribosomal stalk, playing a central role in the interaction of the ribosome with GTP-bound translation factors. This Kineococcus radiotolerans (strain ATCC BAA-149 / DSM 14245 / SRS30216) protein is Large ribosomal subunit protein uL10.